We begin with the raw amino-acid sequence, 239 residues long: Uridylate kinase (239 aa).

Lysine 10–glycine 13 is a binding site for ATP. Glycine 52 serves as a coordination point for UMP. Positions 53 and 57 each coordinate ATP. UMP contacts are provided by residues aspartate 72 and threonine 133–threonine 140. The ATP site is built by threonine 160, tyrosine 166, and aspartate 169.

Belongs to the UMP kinase family. Homohexamer.

It is found in the cytoplasm. The catalysed reaction is UMP + ATP = UDP + ADP. The protein operates within pyrimidine metabolism; CTP biosynthesis via de novo pathway; UDP from UMP (UMPK route): step 1/1. Inhibited by UTP. Catalyzes the reversible phosphorylation of UMP to UDP. In Porphyromonas gingivalis (strain ATCC BAA-308 / W83), this protein is Uridylate kinase.